Consider the following 232-residue polypeptide: uncharacterized protein (232 aa).

A compositionally biased stretch (basic and acidic residues) spans 86–95 (RGLPRPEFKA). Residues 86 to 107 (RGLPRPEFKANGHPSMDAEADD) are disordered.

This is an uncharacterized protein from Sinorhizobium fredii (strain NBRC 101917 / NGR234).